The chain runs to 402 residues: La-related protein 7 homolog (402 aa).

The tract at residues 64–138 (EPLNPDFLSA…FDNSSHMVIR (75 aa)) is HTH La-type RNA-binding-like region. The RRM-like region stretch occupies residues 148 to 230 (IPLYDRIIYV…LTRKEWTNRE (83 aa)). Residues 288-400 (DFTKNLLTRI…EEEKNYWRML (113 aa)) form a xRRM-like region region. Positions 288-402 (DFTKNLLTRI…EKNYWRMLKK (115 aa)) constitute a xRRM domain.

This sequence belongs to the LARP7 family. Component of the telomerase holoenzyme complex composed minimally of trt1 and the telomerase RNA template component. Interacts with skp1.

It is found in the chromosome. Its subcellular location is the telomere. It localises to the nucleus. The protein localises to the cytoplasm. In terms of biological role, RNA-binding protein required for assembly of the holoenzyme telomerase ribonucleoprotein (RNP) complex. Specifically binds telomerase RNA ter1 and promotes assembly of ter1 with catalytic subunit trt1. Telomerase is a ribonucleoprotein enzyme essential that copies new telomeric repeats onto chromosome ends and functions to maintain cell division. The chain is La-related protein 7 homolog from Schizosaccharomyces pombe (strain 972 / ATCC 24843) (Fission yeast).